Reading from the N-terminus, the 782-residue chain is Endonuclease MutS2 (782 aa).

336 to 343 (GPNTGGKT) serves as a coordination point for ATP. The Smr domain occupies 707-782 (LDLRGYRYEE…GFGVTVAELK (76 aa)).

The protein belongs to the DNA mismatch repair MutS family. MutS2 subfamily. As to quaternary structure, homodimer. Binds to stalled ribosomes, contacting rRNA.

Functionally, endonuclease that is involved in the suppression of homologous recombination and thus may have a key role in the control of bacterial genetic diversity. Acts as a ribosome collision sensor, splitting the ribosome into its 2 subunits. Detects stalled/collided 70S ribosomes which it binds and splits by an ATP-hydrolysis driven conformational change. Acts upstream of the ribosome quality control system (RQC), a ribosome-associated complex that mediates the extraction of incompletely synthesized nascent chains from stalled ribosomes and their subsequent degradation. Probably generates substrates for RQC. This is Endonuclease MutS2 from Staphylococcus epidermidis (strain ATCC 12228 / FDA PCI 1200).